Consider the following 321-residue polypeptide: Citrate synthase (321 aa).

Catalysis depends on residues His-248 and Asp-306.

It belongs to the citrate synthase family.

The catalysed reaction is oxaloacetate + acetyl-CoA + H2O = citrate + CoA + H(+). It functions in the pathway carbohydrate metabolism; tricarboxylic acid cycle; isocitrate from oxaloacetate: step 1/2. The chain is Citrate synthase (gltA) from Bartonella bacilliformis.